Here is a 780-residue protein sequence, read N- to C-terminus: ATP-dependent 6-phosphofructokinase, muscle type (780 aa).

Thr-2 is subject to N-acetylthreonine. Positions 2-390 (THEEHHAAKT…NWEVYKLLAH (389 aa)) are N-terminal catalytic PFK domain 1. Residues Gly-25, 88 to 89 (RC), and 118 to 121 (GDGS) contribute to the ATP site. Asp-119 is a Mg(2+) binding site. Phosphoserine is present on Ser-133. Residues 164–166 (SID), Arg-201, 208–210 (MGR), Glu-264, Arg-292, and 298–301 (HVQR) each bind substrate. Asp-166 acts as the Proton acceptor in catalysis. A Phosphoserine modification is found at Ser-377. The interval 391–401 (VRPPVSKSGSH) is interdomain linker. The tract at residues 402–780 (TVAVMNVGAP…TRKRSGEAAV (379 aa)) is C-terminal regulatory PFK domain 2. Beta-D-fructose 2,6-bisphosphate-binding positions include Arg-471 and 528-532 (TVSNN). Ser-530 is a glycosylation site (O-linked (GlcNAc) serine). Lys-557 carries the post-translational modification N6-(2-hydroxyisobutyryl)lysine. Residues Arg-566, 573-575 (MGG), Glu-629, Arg-655, and 661-664 (HMQQ) contribute to the beta-D-fructose 2,6-bisphosphate site. Ser-667 carries the phosphoserine modification. Residue Arg-735 participates in beta-D-fructose 2,6-bisphosphate binding. Ser-775 is subject to Phosphoserine.

It belongs to the phosphofructokinase type A (PFKA) family. ATP-dependent PFK group I subfamily. Eukaryotic two domain clade 'E' sub-subfamily. In terms of assembly, homo- and heterotetramers. Phosphofructokinase (PFK) enzyme functions as a tetramer composed of different combinations of 3 types of subunits, called PFKM (where M stands for Muscle), PFKL (Liver) and PFKP (Platelet). The composition of the PFK tetramer differs according to the tissue type it is present in. In muscles, it is composed of 4 PFKM subunits (also called M4). In the liver, the predominant form is a tetramer of PFKL subunits (L4). In erythrocytes, both PFKM and PFKL subunits randomly tetramerize to form M4, L4 and other combinations (ML3, M2L2, M3L). The kinetic and regulatory properties of the tetrameric enzyme are dependent on the subunit composition, hence can vary across tissues. Interacts (via C-terminus) with HK1 (via N-terminal spermatogenic cell-specific region). Mg(2+) serves as cofactor. GlcNAcylation decreases enzyme activity.

The protein resides in the cytoplasm. The catalysed reaction is beta-D-fructose 6-phosphate + ATP = beta-D-fructose 1,6-bisphosphate + ADP + H(+). The protein operates within carbohydrate degradation; glycolysis; D-glyceraldehyde 3-phosphate and glycerone phosphate from D-glucose: step 3/4. Allosterically activated by ADP, AMP, or fructose 2,6-bisphosphate, and allosterically inhibited by ATP or citrate. Catalyzes the phosphorylation of D-fructose 6-phosphate to fructose 1,6-bisphosphate by ATP, the first committing step of glycolysis. This chain is ATP-dependent 6-phosphofructokinase, muscle type (PFKM), found in Homo sapiens (Human).